The following is a 367-amino-acid chain: Di-N-acetylchitobiase (367 aa).

An N-terminal signal peptide occupies residues 1 to 23 (MALSDLLELTLLLLLPLLERLSA). The GH18 domain occupies 24–367 (EDCPCSEASL…EMWGALRPRL (344 aa)). The active-site Proton donor is the Glu-128. Asn-178, Asn-213, Asn-247, and Asn-284 each carry an N-linked (GlcNAc...) asparagine glycan.

The protein belongs to the glycosyl hydrolase 18 family.

The protein localises to the lysosome. Functionally, involved in the degradation of asparagine-linked glycoproteins. Hydrolyze of N-acetyl-beta-D-glucosamine (1-4)N-acetylglucosamine chitobiose core from the reducing end of the bond, it requires prior cleavage by glycosylasparaginase. In Rattus norvegicus (Rat), this protein is Di-N-acetylchitobiase (Ctbs).